Reading from the N-terminus, the 218-residue chain is Large ribosomal subunit protein uL3 (218 aa).

The tract at residues 127-167 (GFSRGPMSHGSKNHREPGSTGAGTTPGRIYPGKRMAGRYGG) is disordered.

This sequence belongs to the universal ribosomal protein uL3 family. As to quaternary structure, part of the 50S ribosomal subunit. Forms a cluster with proteins L14 and L19.

In terms of biological role, one of the primary rRNA binding proteins, it binds directly near the 3'-end of the 23S rRNA, where it nucleates assembly of the 50S subunit. The polypeptide is Large ribosomal subunit protein uL3 (Prochlorococcus marinus (strain MIT 9303)).